The following is a 23-amino-acid chain: Maculatin-1.2 (23 aa).

The residue at position 23 (Ala23) is an Alanine amide.

As to expression, expressed by the skin dorsal glands.

The protein localises to the secreted. Shows antibacterial activity against S.aureus and S.uberis. In Ranoidea genimaculata (Brown-spotted tree frog), this protein is Maculatin-1.2.